The sequence spans 89 residues: Cell division topological specificity factor (89 aa).

Belongs to the MinE family.

In terms of biological role, prevents the cell division inhibition by proteins MinC and MinD at internal division sites while permitting inhibition at polar sites. This ensures cell division at the proper site by restricting the formation of a division septum at the midpoint of the long axis of the cell. In Yersinia pestis bv. Antiqua (strain Angola), this protein is Cell division topological specificity factor.